A 505-amino-acid chain; its full sequence is Peroxisome proliferator-activated receptor gamma (505 aa).

The interval 1 to 26 is disordered; sequence MGETLGDSLIDPESDSFADTLSASTS. Residues 17-26 are compositionally biased toward polar residues; it reads FADTLSASTS. S112 is subject to Phosphoserine; by MAPK. The segment at residues 136–210 is a DNA-binding region (nuclear receptor); it reads AIECRVCGDK…VGMSHNAIRF (75 aa). 2 consecutive NR C4-type zinc fingers follow at residues 139–159 and 176–198; these read CRVC…CEGC and CDLN…FQKC. The interval 205 to 280 is interaction with FAM120B; that stretch reads HNAIRFGRMP…DKSPFVIYDM (76 aa). An NR LBD domain is found at 238 to 503; it reads DLRALAKHLY…HPLLQEIYKD (266 aa). A Glycyl lysine isopeptide (Lys-Gly) (interchain with G-Cter in ubiquitin) cross-link involves residue K252. A 9aaTAD motif is present at residues 495–503; the sequence is PLLQEIYKD.

The protein belongs to the nuclear hormone receptor family. NR1 subfamily. As to quaternary structure, interacts with FOXO1 (acetylated form). Heterodimer with other nuclear receptors, such as RXRA. The heterodimer with the retinoic acid receptor RXRA is called adipocyte-specific transcription factor ARF6. Interacts with NCOA6 coactivator, leading to a strong increase in transcription of target genes. Interacts with coactivator PPARBP, leading to a mild increase in transcription of target genes. Interacts with NOCA7 in a ligand-inducible manner. Interacts with NCOA1 and NCOA2 LXXLL motifs. Interacts with ASXL1, ASXL2, DNTTIP2, FAM120B, MAP2K1/MEK1, NR0B2, PDPK1, PRDM16, PRMT2 and TGFB1I1. Interacts (when activated by agonist) with PPP5C. Interacts with HELZ2 and THRAP3; the interaction stimulates the transcriptional activity of PPARG. Interacts with PER2, the interaction is ligand dependent and blocks PPARG recruitment to target promoters. Interacts with NOCT. Interacts with ACTN4. Interacts (when in the liganded conformation) with GPS2. Interacts with CRY1 and CRY2 in a ligand-dependent manner. In the absence of hormonal ligand, interacts with TACC1. In macrophages, interacts with PAQR3 and STUB1; the interactions promote PPARG poylubiquitination and STUB1-mediated degradation. Phosphorylated at basal conditions and dephosphorylated when treated with the ligand. May be dephosphorylated by PPP5C. The phosphorylated form may be inactive and dephosphorylation induces adipogenic activity. In terms of processing, ubiquitinated by E3 ubiquitin-protein ligase complex containing FBXO9; leading to proteasomal degradation. Ubiquitinated at Lys-252 by TRIM55 leading to proteasomal degradation. Ubiquitinated by E3 ubiquitin-protein ligase STUB1/CHIP; leading to proteasomal degradation.

It is found in the nucleus. The protein localises to the cytoplasm. PDPK1 activates its transcriptional activity independently of its kinase activity. Functionally, nuclear receptor that binds peroxisome proliferators such as hypolipidemic drugs and fatty acids. Once activated by a ligand, the nuclear receptor binds to DNA specific PPAR response elements (PPRE) and modulates the transcription of its target genes, such as acyl-CoA oxidase. It therefore controls the peroxisomal beta-oxidation pathway of fatty acids. Key regulator of adipocyte differentiation and glucose homeostasis. ARF6 acts as a key regulator of the tissue-specific adipocyte P2 (aP2) enhancer. Acts as a critical regulator of gut homeostasis by suppressing NF-kappa-B-mediated pro-inflammatory responses. Plays a role in the regulation of cardiovascular circadian rhythms by regulating the transcription of BMAL1 in the blood vessels. This chain is Peroxisome proliferator-activated receptor gamma (PPARG), found in Canis lupus familiaris (Dog).